The chain runs to 163 residues: PTS system fructose-specific EIIB component (163 aa).

Residues 1 to 163 form the PTS EIIB type-4 domain; it reads MMNIVLARID…FVQILRNVTK (163 aa). His15 serves as the catalytic Pros-phosphohistidine intermediate. The residue at position 15 (His15) is a Phosphohistidine; by EIIA.

The protein resides in the cytoplasm. It carries out the reaction D-fructose(out) + N(pros)-phospho-L-histidyl-[protein] = D-fructose 1-phosphate(in) + L-histidyl-[protein]. The phosphoenolpyruvate-dependent sugar phosphotransferase system (sugar PTS), a major carbohydrate active -transport system, catalyzes the phosphorylation of incoming sugar substrates concomitantly with their translocation across the cell membrane. The enzyme II LevDE PTS system is involved in fructose transport. Functionally, levD and LevE act as negative regulators of the levanase operon. They may be involved in a PTS-mediated phosphorylation of a regulator. This chain is PTS system fructose-specific EIIB component, found in Bacillus subtilis (strain 168).